A 221-amino-acid chain; its full sequence is Probable GTP-binding protein EngB (221 aa).

Residues 23-211 form the EngB-type G domain; it reads PLREVAFAGR…DNLIIKWLFE (189 aa). Residues S38 and T60 each coordinate Mg(2+).

Belongs to the TRAFAC class TrmE-Era-EngA-EngB-Septin-like GTPase superfamily. EngB GTPase family. It depends on Mg(2+) as a cofactor.

Its function is as follows. Necessary for normal cell division and for the maintenance of normal septation. This is Probable GTP-binding protein EngB from Polynucleobacter asymbioticus (strain DSM 18221 / CIP 109841 / QLW-P1DMWA-1) (Polynucleobacter necessarius subsp. asymbioticus).